The following is a 510-amino-acid chain: Leucine-rich repeat-containing protein 53 (510 aa).

7 LRR repeats span residues Thr-34–Leu-55, Asn-58–Gly-79, Met-82–Thr-102, Ser-108–Asn-129, Gly-132–Gly-153, Ser-158–Pro-179, and Gln-182–Leu-203. The 58-residue stretch at Asn-214–Pro-271 folds into the LRRCT domain. A helical membrane pass occupies residues Leu-294–Phe-314.

It is found in the membrane. The protein is Leucine-rich repeat-containing protein 53 (LRRC53) of Macaca fascicularis (Crab-eating macaque).